We begin with the raw amino-acid sequence, 84 residues long: Small ribosomal subunit protein eS27-like (84 aa).

A compositionally biased stretch (basic and acidic residues) spans 1-16 (MPLARDLLHPSLEEEK). A disordered region spans residues 1-23 (MPLARDLLHPSLEEEKKKHKKKR). A C4-type zinc finger spans residues 38–60 (PGCYKITTVFSHAQTVVLCVGCS).

The protein belongs to the eukaryotic ribosomal protein eS27 family. The cofactor is Zn(2+).

The polypeptide is Small ribosomal subunit protein eS27-like (Mus musculus (Mouse)).